Reading from the N-terminus, the 446-residue chain is Trigger factor (446 aa).

The PPIase FKBP-type domain occupies 161–246 (GDRLTIDFKG…VSKVERSELP (86 aa)). Residues 422-446 (VSYEDAVKPRTAPAEQAEDGEQSAE) form a disordered region. The span at 437 to 446 (QAEDGEQSAE) shows a compositional bias: acidic residues.

This sequence belongs to the FKBP-type PPIase family. Tig subfamily.

Its subcellular location is the cytoplasm. It catalyses the reaction [protein]-peptidylproline (omega=180) = [protein]-peptidylproline (omega=0). Involved in protein export. Acts as a chaperone by maintaining the newly synthesized protein in an open conformation. Functions as a peptidyl-prolyl cis-trans isomerase. This is Trigger factor from Hahella chejuensis (strain KCTC 2396).